Reading from the N-terminus, the 169-residue chain is Peptide deformylase 1 (169 aa).

Fe cation is bound by residues Cys91 and His133. Glu134 is a catalytic residue. A Fe cation-binding site is contributed by His137.

The protein belongs to the polypeptide deformylase family. Fe(2+) serves as cofactor.

It catalyses the reaction N-terminal N-formyl-L-methionyl-[peptide] + H2O = N-terminal L-methionyl-[peptide] + formate. In terms of biological role, removes the formyl group from the N-terminal Met of newly synthesized proteins. Requires at least a dipeptide for an efficient rate of reaction. N-terminal L-methionine is a prerequisite for activity but the enzyme has broad specificity at other positions. The polypeptide is Peptide deformylase 1 (Vibrio cholerae serotype O1 (strain ATCC 39315 / El Tor Inaba N16961)).